A 1234-amino-acid polypeptide reads, in one-letter code: DNA-directed RNA polymerase subunit beta (1234 aa).

It belongs to the RNA polymerase beta chain family. As to quaternary structure, the RNAP catalytic core consists of 2 alpha, 1 beta, 1 beta' and 1 omega subunit. When a sigma factor is associated with the core the holoenzyme is formed, which can initiate transcription.

The enzyme catalyses RNA(n) + a ribonucleoside 5'-triphosphate = RNA(n+1) + diphosphate. In terms of biological role, DNA-dependent RNA polymerase catalyzes the transcription of DNA into RNA using the four ribonucleoside triphosphates as substrates. This Clostridium perfringens (strain ATCC 13124 / DSM 756 / JCM 1290 / NCIMB 6125 / NCTC 8237 / Type A) protein is DNA-directed RNA polymerase subunit beta.